A 179-amino-acid chain; its full sequence is MSRIGLRPIEIPQGVEVKIDEKNFAVVKGPKGTLEQQLSKDMEIKIEENVINVVRPTDNKKHKSLHGLTRTLLSNMVEGVTKGYEKKLELVGVGYRANKQGDKLVLTLGFSHPIEMVDPEGITVEVPSQTEIFVKGINKQVVGNYAAKIRELRKPEPYKGKGVKYANEVIRRKVGKTGK.

This sequence belongs to the universal ribosomal protein uL6 family. In terms of assembly, part of the 50S ribosomal subunit.

Its function is as follows. This protein binds to the 23S rRNA, and is important in its secondary structure. It is located near the subunit interface in the base of the L7/L12 stalk, and near the tRNA binding site of the peptidyltransferase center. This Alkaliphilus oremlandii (strain OhILAs) (Clostridium oremlandii (strain OhILAs)) protein is Large ribosomal subunit protein uL6.